The chain runs to 190 residues: dITP/XTP pyrophosphatase (190 aa).

A substrate-binding site is contributed by 7–12; it reads SNNKNK. Asp68 serves as the catalytic Proton acceptor. Asp68 contributes to the Mg(2+) binding site. Residues Thr69, 148-151, Lys171, and 176-177 each bind substrate; these read FGYD and HR.

It belongs to the HAM1 NTPase family. In terms of assembly, homodimer. Mg(2+) is required as a cofactor.

The catalysed reaction is XTP + H2O = XMP + diphosphate + H(+). The enzyme catalyses dITP + H2O = dIMP + diphosphate + H(+). It carries out the reaction ITP + H2O = IMP + diphosphate + H(+). Pyrophosphatase that catalyzes the hydrolysis of nucleoside triphosphates to their monophosphate derivatives, with a high preference for the non-canonical purine nucleotides XTP (xanthosine triphosphate), dITP (deoxyinosine triphosphate) and ITP. Seems to function as a house-cleaning enzyme that removes non-canonical purine nucleotides from the nucleotide pool, thus preventing their incorporation into DNA/RNA and avoiding chromosomal lesions. This Flavobacterium psychrophilum (strain ATCC 49511 / DSM 21280 / CIP 103535 / JIP02/86) protein is dITP/XTP pyrophosphatase.